Here is a 409-residue protein sequence, read N- to C-terminus: MQYLKPINVFSEIGRLKKVLLHRPGKELENLTPSIMKRLLFDDIPYLHVAIQEHDSFADTLRGNGVKVVYIEDLISETLSNDDSIKEQFISQFILEAGIRTENKTRALKDYFCNMSVNDMISNMIAGVTRDDLKNYKSDSLNSLVNSEYPLIIDPMPNILFTRDPFASIGHGVTINRMSTKTRHRETIFAEYIFKYHPIYKDNVPIWYNRDEDTTLEGGDELVLSRDVLAIGVSERTESESVEKVARKLFEQKISFNTILAFQIPQSRAYMHLDTVFTQIDHTTFTSFISDDMKFTIYALTYDVSSGSIKVKSEKAKLEDILGFYFGCKVNIIKCAGGDLIHGAREQWNDGANTLAISPGEVIVYSRNHMTNKLLEEFGIKVYQIPSSELSRGRGGPRCMSMPLIREDI.

The Amidino-cysteine intermediate role is filled by Cys-399.

It belongs to the arginine deiminase family.

The protein resides in the cytoplasm. It carries out the reaction L-arginine + H2O = L-citrulline + NH4(+). The protein operates within amino-acid degradation; L-arginine degradation via ADI pathway; carbamoyl phosphate from L-arginine: step 1/2. This chain is Arginine deiminase, found in Borrelia recurrentis (strain A1).